Here is a 162-residue protein sequence, read N- to C-terminus: Phosphopantetheine adenylyltransferase (162 aa).

Serine 11 contributes to the substrate binding site. ATP is bound by residues serine 11–phenylalanine 12 and histidine 19. Lysine 43, leucine 75, and arginine 89 together coordinate substrate. ATP-binding positions include glycine 90 to arginine 92, glutamate 100, and phenylalanine 125 to serine 131.

It belongs to the bacterial CoaD family. As to quaternary structure, homohexamer. Mg(2+) is required as a cofactor.

It is found in the cytoplasm. The catalysed reaction is (R)-4'-phosphopantetheine + ATP + H(+) = 3'-dephospho-CoA + diphosphate. The protein operates within cofactor biosynthesis; coenzyme A biosynthesis; CoA from (R)-pantothenate: step 4/5. Functionally, reversibly transfers an adenylyl group from ATP to 4'-phosphopantetheine, yielding dephospho-CoA (dPCoA) and pyrophosphate. The chain is Phosphopantetheine adenylyltransferase from Petrotoga mobilis (strain DSM 10674 / SJ95).